The chain runs to 222 residues: DNA ADP-ribosyl transferase (222 aa).

One can recognise a DarT domain in the interval 12–209; it reads TLIYHITHLN…PVRVRRSWYY (198 aa). NAD(+) is bound by residues 16-18, glycine 25, and leucine 33; that span reads HIT. Residues 38–56 form an NAD(+)-binding element region; sequence RPPTQQNVAYGHIQAHRAQ. The DNA-binding element occupies 47-53; it reads YGHIQAH. Arginine 54 is an NAD(+) binding site. The Proton acceptor role is filled by arginine 54. 3 DNA-binding regions span residues 78–83, 148–151, and 154–158; these read RSPMLY, SYWA, and REKKQ. The ADP-ribosylating turn-turn loop stretch occupies residues 119–160; it reads TDRHAAVQYVCFFHKLEHLKALDWQAIQASYWANVREKKQAE. Glutamate 160 is a catalytic residue.

The protein belongs to the DarT ADP-ribosyltransferase family. As to quaternary structure, interacts with cognate antitoxin DarG (via C-terminus); this heterodimeric complex neutralizes the toxic effect of DarT by preventing ssDNA binding to DarT and consequently inactivating the toxin by direct protein-protein interactions.

It carries out the reaction a thymidine in DNA + NAD(+) = an N-(ADP-alpha-D-ribosyl)-thymidine in DNA + nicotinamide + H(+). Toxic component of the hybrid type II/IV toxin-antitoxin (TA) system DarTG, which plays a crucial role in controlling bacterial growth and bacteriophage infection. Its toxic effect is neutralized by cognate antitoxin DarG. In case of phage infection, DarT toxin ADP-ribosylates DNA, which inhibits both viral DNA and RNA synthesis and leads to abortive infection. ADP-ribosylates ssDNA on the second thymidine of the consensus sequence 5'-TNTC-3'; the protein does not auto-modify. Has no activity on dsDNA in vitro. This leads to a decrease in DNA replication. Upon expression in E.coli inhibits cell growth, colony formation and induces the SOS response. Expression leads to bacteriostasis; however if cells grow over an hour in the presence of toxin, growth is no longer restored on antitoxin-inducing plates. In E.coli ADP-ribosylates genomic DNA (gDNA), which induces RecA expression (a marker for DNA damage). This is DNA ADP-ribosyl transferase from Thermus aquaticus (strain ATCC BAA-2747 / Y51MC23).